Reading from the N-terminus, the 61-residue chain is Metallothionein-1B (61 aa).

The segment at 1 to 29 (MDPNCSCPTSGSCSCAGSCTCKACRCPSC) is beta. Residues Cys-5, Cys-7, Cys-13, Cys-15, Cys-19, Cys-21, Cys-24, Cys-26, Cys-29, Cys-33, Cys-34, Cys-36, Cys-37, Cys-41, Cys-44, Cys-48, Cys-50, Cys-57, Cys-59, and Cys-60 each coordinate a divalent metal cation. The interval 30–61 (KKSCCSCCPVGCAKCAQGCVCKGASDKCSCCA) is alpha.

Belongs to the metallothionein superfamily. Type 1 family.

Metallothioneins have a high content of cysteine residues that bind various heavy metals; these proteins are transcriptionally regulated by both heavy metals and glucocorticoids. The polypeptide is Metallothionein-1B (MT1B) (Ovis aries (Sheep)).